The chain runs to 174 residues: Bifunctional protein PyrR 2 (174 aa).

Substrate is bound by residues 39–40 (TR), 100–108 (DDVLFTGRT), and Arg133. The PRPP-binding signature appears at 96–108 (VILVDDVLFTGRT).

The protein belongs to the purine/pyrimidine phosphoribosyltransferase family. PyrR subfamily. In terms of assembly, homodimer and homohexamer; in equilibrium.

The enzyme catalyses UMP + diphosphate = 5-phospho-alpha-D-ribose 1-diphosphate + uracil. In terms of biological role, regulates transcriptional attenuation of the pyrimidine nucleotide (pyr) operon by binding in a uridine-dependent manner to specific sites on pyr mRNA. This disrupts an antiterminator hairpin in the RNA and favors formation of a downstream transcription terminator, leading to a reduced expression of downstream genes. Its function is as follows. Also displays a weak uracil phosphoribosyltransferase activity which is not physiologically significant. This Lactiplantibacillus plantarum (strain ATCC BAA-793 / NCIMB 8826 / WCFS1) (Lactobacillus plantarum) protein is Bifunctional protein PyrR 2 (pyrR2).